The following is a 417-amino-acid chain: D-amino acid dehydrogenase (417 aa).

Ile3 to Trp17 contacts FAD.

The protein belongs to the DadA oxidoreductase family. Requires FAD as cofactor.

It catalyses the reaction a D-alpha-amino acid + A + H2O = a 2-oxocarboxylate + AH2 + NH4(+). Its pathway is amino-acid degradation; D-alanine degradation; NH(3) and pyruvate from D-alanine: step 1/1. Oxidative deamination of D-amino acids. This Aeromonas hydrophila subsp. hydrophila (strain ATCC 7966 / DSM 30187 / BCRC 13018 / CCUG 14551 / JCM 1027 / KCTC 2358 / NCIMB 9240 / NCTC 8049) protein is D-amino acid dehydrogenase.